We begin with the raw amino-acid sequence, 244 residues long: 5-oxoprolinase subunit A (244 aa).

This sequence belongs to the LamB/PxpA family. In terms of assembly, forms a complex composed of PxpA, PxpB and PxpC.

The catalysed reaction is 5-oxo-L-proline + ATP + 2 H2O = L-glutamate + ADP + phosphate + H(+). Catalyzes the cleavage of 5-oxoproline to form L-glutamate coupled to the hydrolysis of ATP to ADP and inorganic phosphate. This Escherichia fergusonii (strain ATCC 35469 / DSM 13698 / CCUG 18766 / IAM 14443 / JCM 21226 / LMG 7866 / NBRC 102419 / NCTC 12128 / CDC 0568-73) protein is 5-oxoprolinase subunit A.